The chain runs to 554 residues: Hydroxylamine reductase (554 aa).

Residues Cys-3, Cys-6, Cys-18, and Cys-25 each coordinate [2Fe-2S] cluster. The hybrid [4Fe-2O-2S] cluster site is built by His-252, Glu-276, Cys-320, Cys-408, Cys-436, Cys-461, Glu-495, and Lys-497. A Cysteine persulfide modification is found at Cys-408.

It belongs to the HCP family. It depends on [2Fe-2S] cluster as a cofactor. Hybrid [4Fe-2O-2S] cluster serves as cofactor.

It is found in the cytoplasm. It catalyses the reaction A + NH4(+) + H2O = hydroxylamine + AH2 + H(+). In terms of biological role, catalyzes the reduction of hydroxylamine to form NH(3) and H(2)O. The protein is Hydroxylamine reductase of Shewanella baltica (strain OS223).